The primary structure comprises 418 residues: Tyrosine--tRNA ligase (418 aa).

An L-tyrosine-binding site is contributed by Y34. The 'HIGH' region motif lies at 39–48; it reads PTADSLHLGH. L-tyrosine-binding residues include Y169 and Q173. The 'KMSKS' region motif lies at 229 to 233; the sequence is KFGKS. Residue K232 participates in ATP binding. The region spanning 352–418 is the S4 RNA-binding domain; the sequence is LNLVDMLVTA…GKKKYAVLTY (67 aa).

Belongs to the class-I aminoacyl-tRNA synthetase family. TyrS type 1 subfamily. As to quaternary structure, homodimer.

The protein localises to the cytoplasm. The catalysed reaction is tRNA(Tyr) + L-tyrosine + ATP = L-tyrosyl-tRNA(Tyr) + AMP + diphosphate + H(+). In terms of biological role, catalyzes the attachment of tyrosine to tRNA(Tyr) in a two-step reaction: tyrosine is first activated by ATP to form Tyr-AMP and then transferred to the acceptor end of tRNA(Tyr). The polypeptide is Tyrosine--tRNA ligase (Streptococcus pyogenes serotype M6 (strain ATCC BAA-946 / MGAS10394)).